We begin with the raw amino-acid sequence, 1012 residues long: Cellulose synthase-like protein D5 (1012 aa).

Residues 1-81 form a disordered region; sequence MSVDYANYTV…ARVPAPSSNK (81 aa). Over residues 20–37 the composition is skewed to low complexity; the sequence is PSGGAPPAAPSAGGARPG. Basic and acidic residues predominate over residues 57 to 69; it reads GGGDDGAKMDRRL. 2 consecutive transmembrane segments (helical) span residues 150 to 170 and 180 to 200; these read ILSP…LFLV and ALWL…SWLL. Asp280 is a catalytic residue. Residues 597-620 form a disordered region; that stretch reads PRQGSEAMPGAGGGRSGGGSVGGD. Positions 606 to 618 are enriched in gly residues; that stretch reads GAGGGRSGGGSVG. The active site involves Asp717. A run of 6 helical transmembrane segments spans residues 799-819, 825-845, 871-891, 914-934, 948-968, and 978-998; these read LFLI…QFIV, TFLS…LLEV, LAAV…SFTL, SLFI…VVGV, LLGG…FAKG, and TIVY…WITI.

Belongs to the glycosyltransferase 2 family. Plant cellulose synthase-like D subfamily.

The protein localises to the golgi apparatus membrane. Thought to be a Golgi-localized beta-glycan synthase that polymerize the backbones of noncellulosic polysaccharides (hemicelluloses) of plant cell wall. The protein is Cellulose synthase-like protein D5 (CSLD5) of Oryza sativa subsp. japonica (Rice).